The chain runs to 132 residues: Small ribosomal subunit protein uS9 (132 aa).

It belongs to the universal ribosomal protein uS9 family.

The chain is Small ribosomal subunit protein uS9 (rps9) from Thermoplasma volcanium (strain ATCC 51530 / DSM 4299 / JCM 9571 / NBRC 15438 / GSS1).